A 143-amino-acid chain; its full sequence is Transcriptional regulator MraZ (143 aa).

2 consecutive SpoVT-AbrB domains span residues 5-47 (EYQH…PMSE) and 76-119 (ATEC…SKEI).

It belongs to the MraZ family. In terms of assembly, forms oligomers.

The protein resides in the cytoplasm. It localises to the nucleoid. The polypeptide is Transcriptional regulator MraZ (Bacillus licheniformis (strain ATCC 14580 / DSM 13 / JCM 2505 / CCUG 7422 / NBRC 12200 / NCIMB 9375 / NCTC 10341 / NRRL NRS-1264 / Gibson 46)).